Here is a 61-residue protein sequence, read N- to C-terminus: Metallothionein-2 (61 aa).

At M1 the chain carries N-acetylmethionine. A beta region spans residues 1 to 29 (MDPNCSCATDGSCSCSGSCKCKECKCTTC). The a divalent metal cation site is built by C5, C7, C13, C15, C19, C21, C24, C26, C29, C33, C34, C36, C37, C41, C44, C48, C50, and C57. The segment at 30 to 61 (KKSCCSCCPVGCAKCSQGCVCKEASEKCSCCA) is alpha. The residue at position 58 (S58) is a Phosphoserine. A divalent metal cation is bound by residues C59 and C60.

It belongs to the metallothionein superfamily. Type 1 family.

Metallothioneins have a high content of cysteine residues that bind various heavy metals; these proteins are transcriptionally regulated by both heavy metals and glucocorticoids. This chain is Metallothionein-2 (MT2), found in Mesocricetus auratus (Golden hamster).